Reading from the N-terminus, the 902-residue chain is HTH-type transcriptional regulator MalT (902 aa).

39–46 (SPAGYGKT) contacts ATP. The HTH luxR-type domain maps to 832–897 (ELVRTSPLTQ…EAIVTAENLL (66 aa)). A DNA-binding region (H-T-H motif) is located at residues 856–875 (NEQIAQELDVAGTTIKTHIR).

This sequence belongs to the MalT family. Monomer in solution. Oligomerizes to an active state in the presence of the positive effectors ATP and maltotriose.

Activated by ATP and maltotriose, which are both required for DNA binding. Its function is as follows. Positively regulates the transcription of the maltose regulon whose gene products are responsible for uptake and catabolism of malto-oligosaccharides. Specifically binds to the promoter region of its target genes, recognizing a short DNA motif called the MalT box. In Vibrio campbellii (strain ATCC BAA-1116), this protein is HTH-type transcriptional regulator MalT.